Here is a 195-residue protein sequence, read N- to C-terminus: Peptidyl-tRNA hydrolase (195 aa).

Residue Tyr-17 coordinates tRNA. His-22 functions as the Proton acceptor in the catalytic mechanism. Residues Phe-68, Asn-70, and Asn-116 each coordinate tRNA.

It belongs to the PTH family. As to quaternary structure, monomer.

Its subcellular location is the cytoplasm. The catalysed reaction is an N-acyl-L-alpha-aminoacyl-tRNA + H2O = an N-acyl-L-amino acid + a tRNA + H(+). Functionally, hydrolyzes ribosome-free peptidyl-tRNAs (with 1 or more amino acids incorporated), which drop off the ribosome during protein synthesis, or as a result of ribosome stalling. Catalyzes the release of premature peptidyl moieties from peptidyl-tRNA molecules trapped in stalled 50S ribosomal subunits, and thus maintains levels of free tRNAs and 50S ribosomes. The chain is Peptidyl-tRNA hydrolase from Shewanella amazonensis (strain ATCC BAA-1098 / SB2B).